The following is a 217-amino-acid chain: 2-phospho-L-lactate guanylyltransferase (217 aa).

This sequence belongs to the CofC family. In terms of assembly, homodimer.

The enzyme catalyses (2S)-2-phospholactate + GTP + H(+) = (2S)-lactyl-2-diphospho-5'-guanosine + diphosphate. It participates in cofactor biosynthesis; coenzyme F420 biosynthesis. Guanylyltransferase that catalyzes the activation of (2S)-2-phospholactate (2-PL) as (2S)-lactyl-2-diphospho-5'-guanosine, via the condensation of 2-PL with GTP. It is involved in the biosynthesis of coenzyme F420, a hydride carrier cofactor. This is 2-phospho-L-lactate guanylyltransferase from Halorubrum lacusprofundi (strain ATCC 49239 / DSM 5036 / JCM 8891 / ACAM 34).